The chain runs to 83 residues: Hainantoxin-III 8 (83 aa).

Positions Met1–Ala21 are cleaved as a signal peptide. Residues Ser22–Arg48 constitute a propeptide that is removed on maturation. 3 disulfides stabilise this stretch: Cys50/Cys65, Cys57/Cys70, and Cys64/Cys77. Leu81 is subject to Leucine amide.

The protein belongs to the neurotoxin 10 (Hwtx-1) family. 15 (Hntx-3) subfamily. Monomer. In terms of tissue distribution, expressed by the venom gland.

It is found in the secreted. Its function is as follows. Selective antagonist of neuronal tetrodotoxin (TTX)-sensitive voltage-gated sodium channels (IC(50)=1270 nM on Nav1.1/SCN1A, 270 nM on Nav1.2/SCN2A, 491 nM on Nav1.3/SCN3A and 232 nM on Nav1.7/SCN9A). This toxin suppress Nav1.7 current amplitude without significantly altering the activation, inactivation, and repriming kinetics. Short extreme depolarizations partially activate the toxin-bound channel, indicating voltage-dependent inhibition of this toxin. This toxin increases the deactivation of the Nav1.7 current after extreme depolarizations. The toxin-Nav1.7 complex is gradually dissociated upon prolonged strong depolarizations in a voltage-dependent manner, and the unbound toxin rebinds to Nav1.7 after a long repolarization. Moreover, analysis of chimeric channels showed that the DIIS3-S4 linker is critical for toxin binding to Nav1.7. These data are consistent with this toxin interacting with Nav1.7 site 4 and trapping the domain II voltage sensor in the closed state. This chain is Hainantoxin-III 8, found in Cyriopagopus hainanus (Chinese bird spider).